A 224-amino-acid chain; its full sequence is Metalloproteinase inhibitor 4 (224 aa).

A signal peptide spans 1 to 29 (MPQSPRPVPSWALLLRLLALLRPPGLGEA). Residue cysteine 30 coordinates Zn(2+). Involved in metalloproteinase-binding stretches follow at residues 30 to 33 (CSCA) and 99 to 100 (SS). Cystine bridges form between cysteine 30/cysteine 102, cysteine 32/cysteine 131, cysteine 42/cysteine 156, cysteine 158/cysteine 205, cysteine 163/cysteine 168, and cysteine 176/cysteine 197. Positions 30 to 156 (CSCAPAHPQQ…SLNHHYHLNC (127 aa)) constitute an NTR domain.

It belongs to the protease inhibitor I35 (TIMP) family.

The protein localises to the secreted. Its function is as follows. Complexes with metalloproteinases (such as collagenases) and irreversibly inactivates them by binding to their catalytic zinc cofactor. The protein is Metalloproteinase inhibitor 4 (TIMP4) of Bos taurus (Bovine).